Reading from the N-terminus, the 138-residue chain is Large ribosomal subunit protein mL43 (138 aa).

Belongs to the mitochondrion-specific ribosomal protein mL43 family. As to quaternary structure, component of the mitochondrial large ribosomal subunit (mt-LSU). Mature N.crassa 74S mitochondrial ribosomes consist of a small (37S) and a large (54S) subunit. The 37S small subunit contains a 16S ribosomal RNA (16S mt-rRNA) and 32 different proteins. The 54S large subunit contains a 23S rRNA (23S mt-rRNA) and 42 different proteins.

Its subcellular location is the mitochondrion. In terms of biological role, component of the mitochondrial ribosome (mitoribosome), a dedicated translation machinery responsible for the synthesis of mitochondrial genome-encoded proteins, including at least some of the essential transmembrane subunits of the mitochondrial respiratory chain. The mitoribosomes are attached to the mitochondrial inner membrane and translation products are cotranslationally integrated into the membrane. This chain is Large ribosomal subunit protein mL43 (mrpl51), found in Neurospora crassa (strain ATCC 24698 / 74-OR23-1A / CBS 708.71 / DSM 1257 / FGSC 987).